The following is a 184-amino-acid chain: NADH-quinone oxidoreductase subunit B (184 aa).

[4Fe-4S] cluster contacts are provided by C37, C38, C103, and C132.

It belongs to the complex I 20 kDa subunit family. NDH-1 is composed of 14 different subunits. Subunits NuoB, C, D, E, F, and G constitute the peripheral sector of the complex. It depends on [4Fe-4S] cluster as a cofactor.

It is found in the cell membrane. The catalysed reaction is a quinone + NADH + 5 H(+)(in) = a quinol + NAD(+) + 4 H(+)(out). NDH-1 shuttles electrons from NADH, via FMN and iron-sulfur (Fe-S) centers, to quinones in the respiratory chain. The immediate electron acceptor for the enzyme in this species is believed to be a menaquinone. Couples the redox reaction to proton translocation (for every two electrons transferred, four hydrogen ions are translocated across the cytoplasmic membrane), and thus conserves the redox energy in a proton gradient. The chain is NADH-quinone oxidoreductase subunit B from Rhodococcus erythropolis (strain PR4 / NBRC 100887).